Consider the following 333-residue polypeptide: PDZ domain-containing protein GIPC1 (333 aa).

Positions 1–11 (MPLGLGRRKKA) are enriched in basic residues. A disordered region spans residues 1–55 (MPLGLGRRKKAPPLVENEEAEPSRSGLGVGEPGPLGGSGAGESQMGLPPPPASLR). Residues 27-40 (LGVGEPGPLGGSGA) are compositionally biased toward gly residues. Position 68 is a phosphoserine (serine 68). The PDZ domain occupies 133 to 213 (EVEVFKSEDA…GRTFTLKLTE (81 aa)). A disordered region spans residues 221-244 (ISQRSSGGHPGSGPQLGTGRGTLR). Residues serine 222, serine 225, and serine 232 each carry the phosphoserine modification. Residues 228–240 (GHPGSGPQLGTGR) are compositionally biased toward gly residues. Position 242 is a phosphothreonine (threonine 242). Serine 247 is subject to Phosphoserine.

It belongs to the GIPC family. As to quaternary structure, interacts with SDC4/syndecan-4 and SEMA4C/semaphorin-4C. Interacts with RGS19 (C-terminus), GLUT1 (C-terminus), ACTN1, KIF1B, MYO6 and PLEKHG5. Widely expressed.

It is found in the cytoplasm. The protein localises to the membrane. Functionally, may be involved in G protein-linked signaling. This Rattus norvegicus (Rat) protein is PDZ domain-containing protein GIPC1 (Gipc1).